The primary structure comprises 225 residues: NAD(P)H-quinone oxidoreductase subunit K, chloroplastic (225 aa).

[4Fe-4S] cluster contacts are provided by cysteine 43, cysteine 44, cysteine 108, and cysteine 139.

Belongs to the complex I 20 kDa subunit family. NDH is composed of at least 16 different subunits, 5 of which are encoded in the nucleus. The cofactor is [4Fe-4S] cluster.

It is found in the plastid. The protein localises to the chloroplast thylakoid membrane. The catalysed reaction is a plastoquinone + NADH + (n+1) H(+)(in) = a plastoquinol + NAD(+) + n H(+)(out). It carries out the reaction a plastoquinone + NADPH + (n+1) H(+)(in) = a plastoquinol + NADP(+) + n H(+)(out). In terms of biological role, NDH shuttles electrons from NAD(P)H:plastoquinone, via FMN and iron-sulfur (Fe-S) centers, to quinones in the photosynthetic chain and possibly in a chloroplast respiratory chain. The immediate electron acceptor for the enzyme in this species is believed to be plastoquinone. Couples the redox reaction to proton translocation, and thus conserves the redox energy in a proton gradient. The sequence is that of NAD(P)H-quinone oxidoreductase subunit K, chloroplastic from Nuphar advena (Common spatterdock).